Consider the following 513-residue polypeptide: Tyrosine-protein phosphatase non-receptor type substrate 1 (513 aa).

Residues 1–31 (MEPAGPAPGRLGPLLLCLLLSASCFCTGATG) form the signal peptide. The Ig-like V-type domain maps to 32–137 (KELKVTQPEK…SSEPDTEIQS (106 aa)). Residues 32–373 (KELKVTQPEK…PDNNATHNWN (342 aa)) lie on the Extracellular side of the membrane. Residues Asn54, Asn92, Asn168, Asn180, Asn205, Asn209, Asn246, Asn271, Asn293, Asn302, Asn312, Asn320, Asn345, and Asn367 are each glycosylated (N-linked (GlcNAc...) asparagine). Cys55 and Cys121 form a disulfide bridge. 2 consecutive Ig-like C1-type domains span residues 149 to 248 (PSPP…ANLS) and 255 to 343 (PTVK…PAIT). Residues Cys171 and Cys229 are joined by a disulfide bond. An intrachain disulfide couples Cys274 to Cys332. The helical transmembrane segment at 374–394 (VFIGVGVACALLVVLLMAALY) threads the bilayer. Over 395 to 511 (LLRIKQKKAK…FSEYASVQVQ (117 aa)) the chain is Cytoplasmic. Tyr440 is subject to Phosphotyrosine; by Tyr-kinases. An SH2-binding motif is present at residues 440 to 443 (YADL). Residues 444 to 513 (NLPKEKKPAP…EYASVQVQRK (70 aa)) are disordered. The SH3-binding motif lies at 450 to 455 (KPAPRA). Tyr464, Tyr481, and Tyr505 each carry phosphotyrosine; by Tyr-kinases. Short sequence motifs (SH2-binding) lie at residues 464–467 (YASI), 481–484 (YADL), and 505–508 (YASV). A compositionally biased stretch (polar residues) spans 504–513 (EYASVQVQRK).

In terms of assembly, binds PTPN11 when tyrosine-phosphorylated, except in macrophages, where it primarily binds PTPN6. Binds GRB2 vitro. Binds FGR. Binds JAK2 irrespective of its phosphorylation status and forms a stable complex. Binds SCAP1 and/or SCAP2. The resulting complex recruits FYB1. Binds PTK2B. Interacts with TRIM2. N-glycosylated. Post-translationally, phosphorylated on tyrosine residues. In terms of tissue distribution, highly expressed in cerebral cortex, brain, spinal cord, cerebellum and spleen, and at much lower levels in kidney, thymus, heart, lung and liver. Within the cerebellum, highly expressed throughout the molecular layer, and in synaptic glomeruli in the granule cell layer. Detected in neurons of the hippocampus and dentate gyrus, and in olfactory bulb. Not detected in Purkinje cells. Highly expressed in the plexiform layers, optic fiber layer and the outer segments of the photoreceptor layer in the retina. Highly expressed in macrophages. Isoform 3 is detected at very low levels in all tissues tested.

It localises to the membrane. Its function is as follows. Immunoglobulin-like cell surface receptor for CD47. Acts as a docking protein and induces translocation of PTPN6, PTPN11 and other binding partners from the cytosol to the plasma membrane. Supports adhesion of cerebellar neurons, neurite outgrowth and glial cell attachment. May play a key role in intracellular signaling during synaptogenesis and in synaptic function. Involved in the negative regulation of receptor tyrosine kinase-coupled cellular responses induced by cell adhesion, growth factors or insulin. Mediates negative regulation of phagocytosis, mast cell activation and dendritic cell activation. CD47 binding prevents maturation of immature dendritic cells and inhibits cytokine production by mature dendritic cells. Plays a role in antiviral immunity and limits new world arenavirus infection by decreasing virus internalization. Receptor for THBS1. Interaction with THBS1 stimulates phosphorylation of SIRPA. In response to THBS1, involved in ROS signaling in non-phagocytic cells, stimulating NADPH oxidase-derived ROS production. The protein is Tyrosine-protein phosphatase non-receptor type substrate 1 (Sirpa) of Mus musculus (Mouse).